Here is a 219-residue protein sequence, read N- to C-terminus: Cytidylate kinase (219 aa).

Residue 11 to 19 participates in ATP binding; that stretch reads GPAGVGKTT.

The protein belongs to the cytidylate kinase family. Type 1 subfamily.

Its subcellular location is the cytoplasm. It catalyses the reaction CMP + ATP = CDP + ADP. The catalysed reaction is dCMP + ATP = dCDP + ADP. The sequence is that of Cytidylate kinase from Oleidesulfovibrio alaskensis (strain ATCC BAA-1058 / DSM 17464 / G20) (Desulfovibrio alaskensis).